Consider the following 1782-residue polypeptide: AF4/FMR2 family member lilli (1782 aa).

Disordered regions lie at residues 42-84 (NMED…PSEG), 150-313 (ASSS…PPPE), 434-515 (MPTP…QQQQ), 605-637 (GGSSGSCMGTMSSSSSSNKTPSPTDSNRWNLSR), 691-732 (EKLH…QQRY), 768-820 (GALP…LQIP), 839-891 (KVQP…SNKK), 911-1064 (VAAA…AAAS), 1091-1126 (AGNSSSSSKAKRRYSVGSSSNSSSSSETEEQQQHKQ), 1166-1234 (LPQS…KQGQ), 1296-1327 (ARQHHHQPERLKAQQNGHLSSRSAEGARTPKD), 1386-1420 (LKQELPARRRKRSSSSSSSPYKEKKRKKEKAEQLS), 1450-1484 (QESAANGSPNKLQQQQQQSRLSQSQQQQQQQQQQQ), and 1674-1701 (GNTPSSISPSNSVGSQGSGSNTPPGKIV). A compositionally biased stretch (basic and acidic residues) spans 54-80 (REKYERQQGIQSDDRETSLFGEPRRLN). 2 stretches are compositionally biased toward low complexity: residues 164 to 180 (QQQQQQQQQQQHYQQQQ) and 211 to 260 (PSSS…MSSP). A compositionally biased stretch (pro residues) spans 435-447 (PTPPKASPTPPAI). Threonine 443 bears the Phosphothreonine mark. Over residues 450–463 (MKTEKNHSLEKQDS) the composition is skewed to basic and acidic residues. Over residues 465–475 (LENDLELSESD) the composition is skewed to acidic residues. Phosphoserine occurs at positions 472 and 474. 2 stretches are compositionally biased toward low complexity: residues 484-515 (SAGNSSNSSESDSSESGSEASSKGDTQQQQQQ) and 609-622 (GSCMGTMSSSSSSN). Polar residues predominate over residues 623-634 (KTPSPTDSNRWN). Residues 691 to 701 (EKLHDEPRHVG) show a composition bias toward basic and acidic residues. 2 stretches are compositionally biased toward low complexity: residues 714 to 730 (QQQQQQQQQQQQQQQQQ) and 782 to 805 (SDSGSASSGSGSGSSSSDSAGGSS). Over residues 859–869 (PRQKKPRKKKM) the composition is skewed to basic residues. Residues serine 878 and serine 879 each carry the phosphoserine modification. The a.T hook DNA-binding region spans 920–932 (KKGRGRPRKQAQQ). Positions 929–972 (QAQQQQQQQQQQLQQSGNLSSASASSSQAKGPTLTAAKKPLAKA) are enriched in low complexity. Phosphoserine occurs at positions 949 and 951. Positions 973–982 (SVSNSNSTAP) are enriched in polar residues. Low complexity-rich tracts occupy residues 996–1018 (SNSSSNSNTPTKKPTATFATMAA), 1033–1064 (SSSSSCSSTKSSSSSGSDSETPAAAAAGAAAS), 1105–1116 (SVGSSSNSSSSS), and 1174–1196 (SSSDCSSSSNSDSSSNSSGSSSS). A compositionally biased stretch (polar residues) spans 1308 to 1318 (AQQNGHLSSRS). The segment covering 1450-1460 (QESAANGSPNK) has biased composition (polar residues). Serine 1457 bears the Phosphoserine mark. Composition is skewed to low complexity over residues 1461–1484 (LQQQQQQSRLSQSQQQQQQQQQQQ) and 1674–1694 (GNTPSSISPSNSVGSQGSGSN).

The protein belongs to the AF4 family.

The protein resides in the nucleus. In terms of biological role, has a role in transcriptional regulation. Acts in parallel with the Ras/MAPK and the PI3K/PKB pathways in the control of cell identity and cellular growth. Essential for regulation of the cytoskeleton and cell growth but not for cell proliferation or growth rate. Required specifically for the microtubule-based basal transport of lipid droplets. Plays a partially redundant function downstream of Raf in cell fate specification in the developing eye. Pair-rule protein that regulates embryonic cellularization, gastrulation and segmentation. This Drosophila mojavensis (Fruit fly) protein is AF4/FMR2 family member lilli.